The chain runs to 380 residues: Alpha-N-acetylneuraminate alpha-2,8-sialyltransferase ST8SIA3 (380 aa).

Over 1–9 (MRNCKMARV) the chain is Cytoplasmic. Residues 10-33 (ASVLGLVMLSVALLNLSLISYVSL) traverse the membrane as a helical; Signal-anchor for type II membrane protein segment. The Lumenal segment spans residues 34–380 (KKENIFATPK…LTKLTLSHCA (347 aa)). Residues N93 and N113 are each glycosylated (N-linked (GlcNAc...) asparagine). 2 cysteine pairs are disulfide-bonded: C162-C313 and C176-C379. 2 residues coordinate CMP-N-acetyl-beta-neuraminate: N167 and N190. N206 carries N-linked (GlcNAc...) asparagine glycosylation. CMP-N-acetyl-beta-neuraminate contacts are provided by S300, T301, G302, W322, Y336, and H337. H354 functions as the Proton donor/acceptor in the catalytic mechanism.

Belongs to the glycosyltransferase 29 family. As to quaternary structure, homodimer. Post-translationally, autopolysialylated.

It localises to the golgi apparatus membrane. It carries out the reaction [N-acetyl-alpha-D-neuraminosyl-(2-&gt;8)](n) + CMP-N-acetyl-beta-neuraminate = [N-acetyl-alpha-D-neuraminosyl-(2-&gt;8)](n+1) + CMP + H(+). The catalysed reaction is alpha-Neu5Ac-(2-&gt;3)-beta-D-Gal-(1-&gt;4)-6S-D-GlcNAc + CMP-N-acetyl-beta-neuraminate = alpha-Neu5Ac-(2-&gt;8)-alpha-Neu5Ac-(2-&gt;3)-beta-D-Gal-(1-&gt;4)-6S-D-GlcNAc + CMP + H(+). The enzyme catalyses a ganglioside GM3 (d18:1(4E)) + CMP-N-acetyl-beta-neuraminate = a ganglioside GD3 (d18:1(4E)) + CMP + H(+). It catalyses the reaction a ganglioside GM3 + CMP-N-acetyl-beta-neuraminate = a ganglioside GD3 + CMP + H(+). It carries out the reaction an N-acetyl-alpha-neuraminyl-(2-&gt;3)-beta-D-galactosyl derivative + CMP-N-acetyl-beta-neuraminate = an N-acetyl-alpha-neuraminyl-(2-&gt;8)-N-acetyl-alpha-neuraminyl-(2-&gt;3)-beta-D-galactosyl derivative + CMP + H(+). The catalysed reaction is an N-acetyl-alpha-neuraminyl-(2-&gt;3)-beta-D-galactosyl-(1-&gt;4)-N-acetyl-beta-D-glucosaminyl derivative + CMP-N-acetyl-beta-neuraminate = an alpha-Neu5Ac-(2-&gt;8)-alpha-Neu5Ac-(2-&gt;3)-beta-D-Gal-(1-&gt;4)-beta-D-GlcNAc derivative + CMP + H(+). It functions in the pathway protein modification; protein glycosylation. In terms of biological role, catalyzes the transfer of sialic acid from a CMP-linked sialic acid donor onto a terminal alpha-2,3-, alpha-2,6-, or alpha-2,8-linked sialic acid of an acceptor, such as N-linked oligosaccharides of glycoproteins and glycolipids through alpha-2,8-linkages. Forms oligosialic and polysialic acid on various sialylated N-acetyllactosamine oligosaccharides of glycoproteins, including FETUB N-glycans, a2-HS-glycoprotein (AHSG) and alpha 2,3-sialylated glycosphingolipids, such as alpha 2,3-sialylparagloboside and ganglioside GM3 and to a lesser extent NCAM1 N-glycans. However, it is much more specific to N-linked oligosaccharides of glycoproteins than glycosphingolipids. 2,3-sialylparagloboside serves as the best acceptor substrate among the glycolipids. alpha-Neu5Ac-(2-&gt;8)-alpha-Neu5Ac-(2-&gt;3)-beta-D-Gal-(1-&gt;4)-6S-D-GlcNAc and monosialyl and disialyl N-acetyllactosamines are the best acceptor substrates among glycoproteins. May plays critical role in the striatum by mediating the formation of disialylated and trisialylated terminal glycotopes on N- and O-glycans of specific striatal proteins, regulating their distribution in lipid rafts, affecting their interaction with other binding partners, and subsequently modulating striatal functions. The sequence is that of Alpha-N-acetylneuraminate alpha-2,8-sialyltransferase ST8SIA3 from Pan troglodytes (Chimpanzee).